The chain runs to 60 residues: RICYTHKSLQAKTTKSCEGNTCYKMFIRTSREYISERGCGCPTAMWPYQTECCKGDRCNK.

4 cysteine pairs are disulfide-bonded: Cys-3-Cys-22, Cys-17-Cys-39, Cys-41-Cys-52, and Cys-53-Cys-58. An important for binding to L-type calcium channels region spans residues 41-48; sequence CPTAMWPY.

Belongs to the three-finger toxin family. Short-chain subfamily. L-type calcium blocker sub-subfamily. In terms of tissue distribution, expressed by the venom gland.

The protein resides in the secreted. Functionally, this specific blocker of the L-type calcium channel (Cav1/CACNA1) is a smooth muscle relaxant and an inhibitor of cardiac contractions. The polypeptide is Toxin S4C8 (Dendroaspis jamesoni kaimosae (Eastern Jameson's mamba)).